Consider the following 315-residue polypeptide: L-lactate dehydrogenase (315 aa).

Residues V16, D37, and 81–82 (GA) contribute to the NAD(+) site. Residues Q84, R90, and 122–125 (NPVD) each bind substrate. NAD(+) contacts are provided by residues 120-122 (VSN) and S145. 150–153 (DTAR) lines the substrate pocket. Beta-D-fructose 1,6-bisphosphate contacts are provided by R155 and H170. Catalysis depends on H177, which acts as the Proton acceptor. Phosphotyrosine is present on Y224. Residue T233 coordinates substrate.

The protein belongs to the LDH/MDH superfamily. LDH family. Homotetramer.

The protein resides in the cytoplasm. The enzyme catalyses (S)-lactate + NAD(+) = pyruvate + NADH + H(+). Its pathway is fermentation; pyruvate fermentation to lactate; (S)-lactate from pyruvate: step 1/1. Its activity is regulated as follows. Allosterically activated by fructose 1,6-bisphosphate (FBP). Its function is as follows. Catalyzes the conversion of lactate to pyruvate. The chain is L-lactate dehydrogenase from Treponema denticola (strain ATCC 35405 / DSM 14222 / CIP 103919 / JCM 8153 / KCTC 15104).